Here is a 1131-residue protein sequence, read N- to C-terminus: MGMACLTMTEMEGTSTSPVHQNGDIPGNANSVKQIDPVLQVYLYHSLGKAEGDYLKFPAGEYVAEEICVAASKACGITPVYHSMFALMNETERIWYPPNHVFHVDESTRHNVLYRIRFYFPYWYCNGSNRTYRHGISRGAEAPLLDDFVMSYLFAQWRHDFLYGWVKIPVTHETQEECLGMAVLDMMRIAKEKDQTPLDIYSSVSYKTFLPKCVRAKIQDYHILTRKRIRYRFRRFIEQFSHCKATARNLKLKYLINLETLQSAFYTEQFEVKEPGRGPSGEEIFATIIITGNGGIQWSRGKHKESETLTEQDLQLYCDFPDIIDVSIKQANQEGSNESRIVTIHKQDGKSLEIELSSLREALSFVSLIDGYYRLTADAHHYLCKEVAPPMVLENIQSNCHGPISMDFAISKLKKAGNQTGLFVLRCSPKDFNKYFLTFAVERENVTEYKHCLITKNENGEYNLSGTRKNFSNLKDLLNCYQMETVRSDSIIFQFTKCCPPKPKDKSNLLVFRTNGISDVPTSPTLQRHNNVNQMVFHKIRNEDLIFNESLGQGTFTKIFKGVRREVGDYGQLHETEVLLKVLDKAHRNYSESFFEAASMMSQLSHKHLVLNYGVCVCGEENILVQEFVKFGSLDTYLKKNKNSINILWKLEVAKQLAWAMHFLEEKTLIHGNVCAKNILLIREEDRKTGNPPFIKLSDPGISITVLPKDILQERIPWVPPECIENPKNLNLATDKWSFGTTLWEICSGGDKPLNALDSQRKLQFYEDRHQLPAPKWTELANLINNCMDYEPDFRPSFRAIIRDLNSLFTPDYELLTENDMLPNMRIGALGFSGAFEDRDPTQFEERHLKFLQQLGKGNFGSVEMCRYDPLQDNTGEVVAVKKLQHSTEEHLRDFEREIEILKSLQHDNIVKYKGVCYSAGRRNLRLIMEYLPYGSLRDYLQKHKERIDHKKLLQYTSQICKGMEYLGTKRYIHRDLATRNILVENENRVKIGDFGLTKVLPQDKEYYKVKEPGESPIFWYAPESLTESKFSVASDVWSFGVVLYELFTYIEKSKSPPAEFMRMIGNDKQGQMIVFHLIELLKNNGRLPRPDGCPDEIYIIMTECWNNNVNQRPSFRDLALRVDQIRDSMA.

An interaction with cytokine/interferon/growth hormone receptors region spans residues 1–239; sequence MGMACLTMTE…RYRFRRFIEQ (239 aa). The FERM domain occupies 37 to 380; that stretch reads PVLQVYLYHS…GYYRLTADAH (344 aa). Tyr119 is modified (phosphotyrosine; by autocatalysis). A phosphotyrosine mark is found at Tyr372 and Tyr373. Residues 401–482 enclose the SH2; atypical domain; it reads HGPISMDFAI…NLKDLLNCYQ (82 aa). Ser523 is modified (phosphoserine). In terms of domain architecture, Protein kinase 1 spans 545–809; that stretch reads LIFNESLGQG…AIIRDLNSLF (265 aa). A phosphotyrosine mark is found at Tyr570 and Tyr813. Residues 849–1126 enclose the Protein kinase 2 domain; it reads LKFLQQLGKG…RDLALRVDQI (278 aa). Position 855–863 (855–863) interacts with ATP; it reads LGKGNFGSV. Tyr868 carries the phosphotyrosine; by autocatalysis modification. Lys882 contributes to the ATP binding site. Tyr966 and Tyr972 each carry phosphotyrosine; by autocatalysis. Asp976 (proton acceptor) is an active-site residue. Phosphotyrosine; by autocatalysis occurs at positions 1007 and 1008.

It belongs to the protein kinase superfamily. Tyr protein kinase family. JAK subfamily. As to quaternary structure, interacts with IL23R, SKB1 and STAM2. Interacts with EPOR. Interacts with LYN. Interacts with SIRPA. Interacts with SH2B1. Interacts with TEC. Interacts with IFNGR2 (via intracellular domain). Interacts with LEPR (Isoform B). Interacts with HSP90AB1; promotes functional activation in a heat shock-dependent manner. Interacts with STRA6. Interacts with ASB2; the interaction targets JAK2 for Notch-induced proteasomal degradation. The cofactor is Mg(2+). Post-translationally, autophosphorylated, leading to regulate its activity. Leptin promotes phosphorylation on tyrosine residues, including phosphorylation on Tyr-813. Autophosphorylation on Tyr-119 in response to EPO down-regulates its kinase activity. Autophosphorylation on Tyr-868, Tyr-966 and Tyr-972 in response to growth hormone (GH) are required for maximal kinase activity. Also phosphorylated by TEC. Phosphorylated on tyrosine residues in response to interferon gamma signaling. Phosphorylated on tyrosine residues in response to a signaling cascade that is activated by increased cellular retinol. Undergoes Notch-induced ubiquitination and subsequent proteasomal degradation which is mediated by ASB1 or ASB2, the substrate-recognition components of probable ECS E3 ubiquitin-protein ligase complexes.

It localises to the endomembrane system. It is found in the cytoplasm. Its subcellular location is the nucleus. It carries out the reaction L-tyrosyl-[protein] + ATP = O-phospho-L-tyrosyl-[protein] + ADP + H(+). With respect to regulation, regulated by autophosphorylation, can both activate or decrease activity. Heme regulates its activity by enhancing the phosphorylation on Tyr-1007 and Tyr-1008. Non-receptor tyrosine kinase involved in various processes such as cell growth, development, differentiation or histone modifications. Mediates essential signaling events in both innate and adaptive immunity. In the cytoplasm, plays a pivotal role in signal transduction via its association with type I receptors such as growth hormone (GHR), prolactin (PRLR), leptin (LEPR), erythropoietin (EPOR), thrombopoietin (THPO); or type II receptors including IFN-alpha, IFN-beta, IFN-gamma and multiple interleukins. Following ligand-binding to cell surface receptors, phosphorylates specific tyrosine residues on the cytoplasmic tails of the receptor, creating docking sites for STATs proteins. Subsequently, phosphorylates the STATs proteins once they are recruited to the receptor. Phosphorylated STATs then form homodimer or heterodimers and translocate to the nucleus to activate gene transcription. For example, cell stimulation with erythropoietin (EPO) during erythropoiesis leads to JAK2 autophosphorylation, activation, and its association with erythropoietin receptor (EPOR) that becomes phosphorylated in its cytoplasmic domain. Then, STAT5 (STAT5A or STAT5B) is recruited, phosphorylated and activated by JAK2. Once activated, dimerized STAT5 translocates into the nucleus and promotes the transcription of several essential genes involved in the modulation of erythropoiesis. Part of a signaling cascade that is activated by increased cellular retinol and that leads to the activation of STAT5 (STAT5A or STAT5B). In addition, JAK2 mediates angiotensin-2-induced ARHGEF1 phosphorylation. Plays a role in cell cycle by phosphorylating CDKN1B. Cooperates with TEC through reciprocal phosphorylation to mediate cytokine-driven activation of FOS transcription. In the nucleus, plays a key role in chromatin by specifically mediating phosphorylation of 'Tyr-41' of histone H3 (H3Y41ph), a specific tag that promotes exclusion of CBX5 (HP1 alpha) from chromatin. Up-regulates the potassium voltage-gated channel activity of KCNA3. The polypeptide is Tyrosine-protein kinase JAK2 (Sus scrofa (Pig)).